The primary structure comprises 485 residues: Regulatory protein ViaA (485 aa).

The protein belongs to the ViaA family. In terms of assembly, homodimer. Interacts with RavA.

It localises to the cytoplasm. Its function is as follows. Component of the RavA-ViaA chaperone complex, which may act on the membrane to optimize the function of some of the respiratory chains. ViaA stimulates the ATPase activity of RavA. This is Regulatory protein ViaA from Photorhabdus laumondii subsp. laumondii (strain DSM 15139 / CIP 105565 / TT01) (Photorhabdus luminescens subsp. laumondii).